The following is a 356-amino-acid chain: Phenylalanine--tRNA ligase alpha subunit (356 aa).

Position 258 (Glu-258) interacts with Mg(2+).

The protein belongs to the class-II aminoacyl-tRNA synthetase family. Phe-tRNA synthetase alpha subunit type 1 subfamily. As to quaternary structure, tetramer of two alpha and two beta subunits. Requires Mg(2+) as cofactor.

The protein resides in the cytoplasm. The catalysed reaction is tRNA(Phe) + L-phenylalanine + ATP = L-phenylalanyl-tRNA(Phe) + AMP + diphosphate + H(+). The sequence is that of Phenylalanine--tRNA ligase alpha subunit from Macrococcus caseolyticus (strain JCSC5402) (Macrococcoides caseolyticum).